Reading from the N-terminus, the 160-residue chain is Large ribosomal subunit protein uL13 (160 aa).

This sequence belongs to the universal ribosomal protein uL13 family. Part of the 50S ribosomal subunit.

In terms of biological role, this protein is one of the early assembly proteins of the 50S ribosomal subunit, although it is not seen to bind rRNA by itself. It is important during the early stages of 50S assembly. This chain is Large ribosomal subunit protein uL13, found in Orientia tsutsugamushi (strain Boryong) (Rickettsia tsutsugamushi).